The primary structure comprises 462 residues: Argininosuccinate lyase (462 aa).

This sequence belongs to the lyase 1 family. Argininosuccinate lyase subfamily.

The protein resides in the cytoplasm. It catalyses the reaction 2-(N(omega)-L-arginino)succinate = fumarate + L-arginine. It functions in the pathway amino-acid biosynthesis; L-arginine biosynthesis; L-arginine from L-ornithine and carbamoyl phosphate: step 3/3. In Lachnoclostridium phytofermentans (strain ATCC 700394 / DSM 18823 / ISDg) (Clostridium phytofermentans), this protein is Argininosuccinate lyase.